The primary structure comprises 587 residues: Protein SIX6OS1 (587 aa).

The disordered stretch occupies residues 356–378 (TPQKQSNSNQWSEKGDKDAEYGD). A compositionally biased stretch (polar residues) spans 357-367 (PQKQSNSNQWS). A compositionally biased stretch (basic and acidic residues) spans 368 to 378 (EKGDKDAEYGD). The residue at position 439 (Ser439) is a Phosphoserine. Residues 568 to 587 (SSSLKGFSSSSQNTTQFTFF) form a disordered region.

As to quaternary structure, interacts with SYCE1. Interacts with proteasome subunit PSMA8; to participate in meiosis progression during spermatogenesis. In terms of tissue distribution, highest expression in retina, skeletal muscle, testis and colon.

It localises to the chromosome. Its function is as follows. Meiotic protein that localizes to the central element of the synaptonemal complex and is required for chromosome synapsis during meiotic recombination. Required for the appropriate processing of intermediate recombination nodules before crossover formation. In Homo sapiens (Human), this protein is Protein SIX6OS1.